The following is a 194-amino-acid chain: dTTP/UTP pyrophosphatase (194 aa).

The Proton acceptor role is filled by Asp76.

This sequence belongs to the Maf family. YhdE subfamily. A divalent metal cation is required as a cofactor.

It is found in the cytoplasm. It carries out the reaction dTTP + H2O = dTMP + diphosphate + H(+). The enzyme catalyses UTP + H2O = UMP + diphosphate + H(+). Functionally, nucleoside triphosphate pyrophosphatase that hydrolyzes dTTP and UTP. May have a dual role in cell division arrest and in preventing the incorporation of modified nucleotides into cellular nucleic acids. This is dTTP/UTP pyrophosphatase from Shewanella oneidensis (strain ATCC 700550 / JCM 31522 / CIP 106686 / LMG 19005 / NCIMB 14063 / MR-1).